Reading from the N-terminus, the 489-residue chain is Betaine aldehyde dehydrogenase (489 aa).

Residues Thr-26 and Asp-93 each coordinate K(+). 150–152 (GAW) lines the NAD(+) pocket. Lys-162 (charge relay system) is an active-site residue. 176-179 (KPSE) contacts NAD(+). Val-180 contacts K(+). 229–232 (GVET) contributes to the NAD(+) binding site. Leu-245 contacts K(+). Glu-251 (proton acceptor) is an active-site residue. Residues Gly-253, Cys-285, and Glu-386 each coordinate NAD(+). The Nucleophile role is filled by Cys-285. At Cys-285 the chain carries Cysteine sulfenic acid (-SOH). 2 residues coordinate K(+): Lys-456 and Gly-459. Glu-463 (charge relay system) is an active-site residue.

Belongs to the aldehyde dehydrogenase family. Dimer of dimers. K(+) is required as a cofactor.

It carries out the reaction betaine aldehyde + NAD(+) + H2O = glycine betaine + NADH + 2 H(+). The protein operates within amine and polyamine biosynthesis; betaine biosynthesis via choline pathway; betaine from betaine aldehyde: step 1/1. In terms of biological role, involved in the biosynthesis of the osmoprotectant glycine betaine. Catalyzes the irreversible oxidation of betaine aldehyde to the corresponding acid. The protein is Betaine aldehyde dehydrogenase of Burkholderia lata (strain ATCC 17760 / DSM 23089 / LMG 22485 / NCIMB 9086 / R18194 / 383).